The sequence spans 152 residues: UPF0225 protein KPK_2103 (152 aa).

Belongs to the UPF0225 family.

This Klebsiella pneumoniae (strain 342) protein is UPF0225 protein KPK_2103.